A 181-amino-acid polypeptide reads, in one-letter code: Large ribosomal subunit protein uL6 (181 aa).

It belongs to the universal ribosomal protein uL6 family. As to quaternary structure, part of the 50S ribosomal subunit.

In terms of biological role, this protein binds to the 23S rRNA, and is important in its secondary structure. It is located near the subunit interface in the base of the L7/L12 stalk, and near the tRNA binding site of the peptidyltransferase center. The polypeptide is Large ribosomal subunit protein uL6 (Synechococcus sp. (strain CC9605)).